The following is a 411-amino-acid chain: Multidrug resistance protein MdtA (411 aa).

The first 26 residues, 1–26 (MNNNKKTKKRFSLIIILLIVIAGAIA), serve as a signal peptide directing secretion. A compositionally biased stretch (polar residues) spans 35–55 (SAPPVSKDTPTANTPNRSTAG). The interval 35–64 (SAPPVSKDTPTANTPNRSTAGSRRPPMPPV) is disordered.

This sequence belongs to the membrane fusion protein (MFP) (TC 8.A.1) family. In terms of assembly, part of a tripartite efflux system composed of MdtA, MdtB and MdtC.

The protein resides in the cell inner membrane. This is Multidrug resistance protein MdtA from Proteus mirabilis (strain HI4320).